A 478-amino-acid polypeptide reads, in one-letter code: JmjC domain-containing histone demethylation protein 1 (478 aa).

The PHD-type zinc finger occupies 6 to 70; sequence VKCHFCKKDD…HVESFKCTLH (65 aa). The JmjC domain occupies 242–401; the sequence is SHVESFKDGI…TQLNVVEIEH (160 aa). Threonine 294 serves as a coordination point for substrate. Residues histidine 297 and aspartate 299 each coordinate Fe cation. Lysine 314 provides a ligand contact to substrate. Position 369 (histidine 369) interacts with Fe cation.

This sequence belongs to the JHDM1 histone demethylase family. Fe(2+) is required as a cofactor.

The protein localises to the nucleus. It catalyses the reaction N(6),N(6)-dimethyl-L-lysyl(36)-[histone H3] + 2 2-oxoglutarate + 2 O2 = L-lysyl(36)-[histone H3] + 2 formaldehyde + 2 succinate + 2 CO2. In terms of biological role, histone demethylase that specifically demethylates 'Lys-36' of histone H3, thereby playing a central role in histone code. The protein is JmjC domain-containing histone demethylation protein 1 (JHD1) of Kluyveromyces lactis (strain ATCC 8585 / CBS 2359 / DSM 70799 / NBRC 1267 / NRRL Y-1140 / WM37) (Yeast).